Reading from the N-terminus, the 1403-residue chain is DNA-directed RNA polymerase subunit beta' (1403 aa).

Cys70, Cys72, Cys85, and Cys88 together coordinate Zn(2+). Mg(2+)-binding residues include Asp460, Asp462, and Asp464. Zn(2+) contacts are provided by Cys814, Cys888, Cys895, and Cys898. Residues 1369–1403 (RRKRRMLEQPESLTADTGTSHYGEDEISESGAATA) form a disordered region. The segment covering 1379–1388 (ESLTADTGTS) has biased composition (polar residues).

The protein belongs to the RNA polymerase beta' chain family. As to quaternary structure, the RNAP catalytic core consists of 2 alpha, 1 beta, 1 beta' and 1 omega subunit. When a sigma factor is associated with the core the holoenzyme is formed, which can initiate transcription. The cofactor is Mg(2+). Zn(2+) is required as a cofactor.

It catalyses the reaction RNA(n) + a ribonucleoside 5'-triphosphate = RNA(n+1) + diphosphate. DNA-dependent RNA polymerase catalyzes the transcription of DNA into RNA using the four ribonucleoside triphosphates as substrates. The protein is DNA-directed RNA polymerase subunit beta' of Nitrosococcus oceani (strain ATCC 19707 / BCRC 17464 / JCM 30415 / NCIMB 11848 / C-107).